The primary structure comprises 552 residues: Dihydroxy-acid dehydratase (552 aa).

Mg(2+) is bound at residue D78. C119 serves as a coordination point for [2Fe-2S] cluster. Positions 120 and 121 each coordinate Mg(2+). K121 is modified (N6-carboxylysine). C191 contacts [2Fe-2S] cluster. E442 lines the Mg(2+) pocket. S468 (proton acceptor) is an active-site residue.

It belongs to the IlvD/Edd family. As to quaternary structure, homodimer. [2Fe-2S] cluster is required as a cofactor. Mg(2+) serves as cofactor.

The enzyme catalyses (2R)-2,3-dihydroxy-3-methylbutanoate = 3-methyl-2-oxobutanoate + H2O. It carries out the reaction (2R,3R)-2,3-dihydroxy-3-methylpentanoate = (S)-3-methyl-2-oxopentanoate + H2O. It functions in the pathway amino-acid biosynthesis; L-isoleucine biosynthesis; L-isoleucine from 2-oxobutanoate: step 3/4. Its pathway is amino-acid biosynthesis; L-valine biosynthesis; L-valine from pyruvate: step 3/4. Functions in the biosynthesis of branched-chain amino acids. Catalyzes the dehydration of (2R,3R)-2,3-dihydroxy-3-methylpentanoate (2,3-dihydroxy-3-methylvalerate) into 2-oxo-3-methylpentanoate (2-oxo-3-methylvalerate) and of (2R)-2,3-dihydroxy-3-methylbutanoate (2,3-dihydroxyisovalerate) into 2-oxo-3-methylbutanoate (2-oxoisovalerate), the penultimate precursor to L-isoleucine and L-valine, respectively. In Ruminiclostridium cellulolyticum (strain ATCC 35319 / DSM 5812 / JCM 6584 / H10) (Clostridium cellulolyticum), this protein is Dihydroxy-acid dehydratase.